The chain runs to 736 residues: Myosin-7 (736 aa).

The Myosin motor domain occupies 1–342 (NWMVTRINAT…LLGLLEEMRD (342 aa)). The segment at 219 to 241 (LNKLMTNLRSTHPHFVRCIIPNE) is actin-binding. The region spanning 345–374 (LSRIITRIQAQSRGVLSRMEYKKLLERRDS) is the IQ domain. A coiled-coil region spans residues 403 to 736 (LLKSAETEKE…MNKKREAEFQ (334 aa)). A Phosphoserine modification is found at S701. Positions 716–736 (EAGGATSVQIEMNKKREAEFQ) are disordered. A compositionally biased stretch (basic and acidic residues) spans 727-736 (MNKKREAEFQ).

The protein belongs to the TRAFAC class myosin-kinesin ATPase superfamily. Myosin family. Muscle myosin is a hexameric protein that consists of 2 heavy chain subunits (MHC), 2 alkali light chain subunits (MLC) and 2 regulatory light chain subunits (MLC-2). Interacts with ECPAS. Interacts (via C-terminus) with LRRC39.

It localises to the cytoplasm. Its subcellular location is the myofibril. The protein resides in the sarcomere. Its function is as follows. Myosins are actin-based motor molecules with ATPase activity essential for muscle contraction. Forms regular bipolar thick filaments that, together with actin thin filaments, constitute the fundamental contractile unit of skeletal and cardiac muscle. The polypeptide is Myosin-7 (MYH7) (Oryctolagus cuniculus (Rabbit)).